The following is a 108-amino-acid chain: Thiosulfate sulfurtransferase GlpE (108 aa).

The Rhodanese domain maps to glutamine 17–alanine 105. Cysteine 65 serves as the catalytic Cysteine persulfide intermediate.

This sequence belongs to the GlpE family.

Its subcellular location is the cytoplasm. It carries out the reaction thiosulfate + hydrogen cyanide = thiocyanate + sulfite + 2 H(+). The catalysed reaction is thiosulfate + [thioredoxin]-dithiol = [thioredoxin]-disulfide + hydrogen sulfide + sulfite + 2 H(+). Transferase that catalyzes the transfer of sulfur from thiosulfate to thiophilic acceptors such as cyanide or dithiols. May function in a CysM-independent thiosulfate assimilation pathway by catalyzing the conversion of thiosulfate to sulfite, which can then be used for L-cysteine biosynthesis. This chain is Thiosulfate sulfurtransferase GlpE, found in Escherichia coli O127:H6 (strain E2348/69 / EPEC).